A 161-amino-acid polypeptide reads, in one-letter code: Nucleoside diphosphate kinase (161 aa).

The ATP site is built by Lys12, Phe60, Arg88, Thr94, and Arg105. The Pros-phosphohistidine intermediate role is filled by His121.

This sequence belongs to the NDK family. Mg(2+) is required as a cofactor.

The protein localises to the cytoplasm. It carries out the reaction a 2'-deoxyribonucleoside 5'-diphosphate + ATP = a 2'-deoxyribonucleoside 5'-triphosphate + ADP. The enzyme catalyses a ribonucleoside 5'-diphosphate + ATP = a ribonucleoside 5'-triphosphate + ADP. Its function is as follows. Major role in the synthesis of nucleoside triphosphates other than ATP. The ATP gamma phosphate is transferred to the NDP beta phosphate via a ping-pong mechanism, using a phosphorylated active-site intermediate. This is Nucleoside diphosphate kinase from Pyrococcus furiosus (strain ATCC 43587 / DSM 3638 / JCM 8422 / Vc1).